The primary structure comprises 341 residues: Malate dehydrogenase 2, mitochondrial (341 aa).

The transit peptide at 1–22 directs the protein to the mitochondrion; sequence MFRSMIVRSASPVKQGLLRRGF. Residues 36-42 and D62 each bind NAD(+); that span reads GAAGGIG. 2 residues coordinate substrate: R109 and R115. NAD(+) contacts are provided by residues N122 and 145 to 147; that span reads ISN. The substrate site is built by N147 and R181. H205 functions as the Proton acceptor in the catalytic mechanism. NAD(+) is bound at residue M256.

It belongs to the LDH/MDH superfamily. MDH type 1 family. In terms of assembly, homodimer. In terms of tissue distribution, expressed in rosette leaves at low levels.

It localises to the mitochondrion matrix. The catalysed reaction is (S)-malate + NAD(+) = oxaloacetate + NADH + H(+). Its function is as follows. Catalyzes a reversible NAD-dependent dehydrogenase reaction involved in central metabolism and redox homeostasis between organelle compartments. Required for carbon dioxide and energy partitioning in leaves. May limit photorespiration during the dark phase. Can convert 2-ketoglutarate to L-2-hydroxyglutarate in vitro. The chain is Malate dehydrogenase 2, mitochondrial from Arabidopsis thaliana (Mouse-ear cress).